A 96-amino-acid chain; its full sequence is Cathelin (96 aa).

A Pyrrolidone carboxylic acid modification is found at Q1. The interval 31–50 (DQPPKADEDPGTPKPVSFTV) is disordered. Intrachain disulfides connect C55–C66 and C73–C90.

Belongs to the cathelicidin family.

Its subcellular location is the secreted. Probably a microbicidal peptide. In Sus scrofa (Pig), this protein is Cathelin.